A 319-amino-acid chain; its full sequence is Solute carrier family 25 member 34 (319 aa).

Positions 1–22 (MNSAFSGPSSPTPGPSPPRPPL) are disordered. The span at 10–22 (SPTPGPSPPRPPL) shows a compositional bias: pro residues. Solcar repeat units lie at residues 22-115 (LWPP…MQAA), 119-212 (DGPC…AKDW), and 222-313 (LSSL…LRQR). The next 6 membrane-spanning stretches (helical) occupy residues 25 to 45 (PLDF…TNPL), 63 to 83 (SYRR…RTDG), 116 to 138 (GVTD…GAFI), 188 to 209 (VNGA…FSSA), 224 to 244 (SLNT…IMTP), and 296 to 319 (LAPH…PYTH).

It belongs to the mitochondrial carrier (TC 2.A.29) family.

The protein resides in the mitochondrion inner membrane. This chain is Solute carrier family 25 member 34 (slc25a34), found in Danio rerio (Zebrafish).